Reading from the N-terminus, the 187-residue chain is Peptidyl-tRNA hydrolase (187 aa).

TRNA is bound at residue Tyr15. The active-site Proton acceptor is the His20. Positions 65, 67, and 113 each coordinate tRNA.

This sequence belongs to the PTH family. In terms of assembly, monomer.

It localises to the cytoplasm. It carries out the reaction an N-acyl-L-alpha-aminoacyl-tRNA + H2O = an N-acyl-L-amino acid + a tRNA + H(+). In terms of biological role, hydrolyzes ribosome-free peptidyl-tRNAs (with 1 or more amino acids incorporated), which drop off the ribosome during protein synthesis, or as a result of ribosome stalling. Functionally, catalyzes the release of premature peptidyl moieties from peptidyl-tRNA molecules trapped in stalled 50S ribosomal subunits, and thus maintains levels of free tRNAs and 50S ribosomes. The protein is Peptidyl-tRNA hydrolase of Elusimicrobium minutum (strain Pei191).